A 1004-amino-acid chain; its full sequence is Glycine dehydrogenase (decarboxylating), mitochondrial (1004 aa).

N6-(pyridoxal phosphate)lysine is present on Lys-738.

Belongs to the GcvP family. As to quaternary structure, homodimer. Interacts with GCSH. The glycine cleavage system is composed of four proteins: P (GLDC), T (GCST), L (DLD) and H (GCSH). Pyridoxal 5'-phosphate is required as a cofactor. In terms of tissue distribution, liver (at protein level).

It is found in the mitochondrion. It catalyses the reaction N(6)-[(R)-lipoyl]-L-lysyl-[glycine-cleavage complex H protein] + glycine + H(+) = N(6)-[(R)-S(8)-aminomethyldihydrolipoyl]-L-lysyl-[glycine-cleavage complex H protein] + CO2. Stimulated by lipoic acid. Inhibited in presence of methylamine. The glycine cleavage system catalyzes the degradation of glycine. The P protein (GLDC) binds the alpha-amino group of glycine through its pyridoxal phosphate cofactor; CO(2) is released and the remaining methylamine moiety is then transferred to the lipoamide cofactor of the H protein (GCSH). This is Glycine dehydrogenase (decarboxylating), mitochondrial from Gallus gallus (Chicken).